The primary structure comprises 421 residues: UDP-N-acetylglucosamine 1-carboxyvinyltransferase (421 aa).

Phosphoenolpyruvate is bound at residue 22–23; sequence KN. Arg-94 contacts UDP-N-acetyl-alpha-D-glucosamine. Cys-118 serves as the catalytic Proton donor. Cys-118 carries the 2-(S-cysteinyl)pyruvic acid O-phosphothioketal modification. Residues 123–127, Asp-308, and Ile-330 each bind UDP-N-acetyl-alpha-D-glucosamine; that span reads RPMDL.

The protein belongs to the EPSP synthase family. MurA subfamily.

It localises to the cytoplasm. The enzyme catalyses phosphoenolpyruvate + UDP-N-acetyl-alpha-D-glucosamine = UDP-N-acetyl-3-O-(1-carboxyvinyl)-alpha-D-glucosamine + phosphate. It participates in cell wall biogenesis; peptidoglycan biosynthesis. In terms of biological role, cell wall formation. Adds enolpyruvyl to UDP-N-acetylglucosamine. The sequence is that of UDP-N-acetylglucosamine 1-carboxyvinyltransferase from Ruegeria pomeroyi (strain ATCC 700808 / DSM 15171 / DSS-3) (Silicibacter pomeroyi).